We begin with the raw amino-acid sequence, 156 residues long: Transcriptional repressor NrdR (156 aa).

The segment at 3–34 (CPKCNSTHSRVVDSRHADEVNAIRRRRECEEC) is a zinc-finger region. Positions 49 to 139 (LIVVKKDGTR…VYKEFKDVDQ (91 aa)) constitute an ATP-cone domain.

Belongs to the NrdR family. The cofactor is Zn(2+).

In terms of biological role, negatively regulates transcription of bacterial ribonucleotide reductase nrd genes and operons by binding to NrdR-boxes. The protein is Transcriptional repressor NrdR of Staphylococcus saprophyticus subsp. saprophyticus (strain ATCC 15305 / DSM 20229 / NCIMB 8711 / NCTC 7292 / S-41).